The primary structure comprises 252 residues: Isoprenyl transferase (252 aa).

Asp28 is a catalytic residue. Asp28 contributes to the Mg(2+) binding site. Residues 29–32 (GNGR), Trp33, Arg41, His45, and 73–75 (STE) contribute to the substrate site. Asn76 (proton acceptor) is an active-site residue. Substrate is bound by residues Trp77, Arg79, Arg200, and 206–208 (RLS). Residue Glu219 coordinates Mg(2+).

This sequence belongs to the UPP synthase family. As to quaternary structure, homodimer. Mg(2+) is required as a cofactor.

Its function is as follows. Catalyzes the condensation of isopentenyl diphosphate (IPP) with allylic pyrophosphates generating different type of terpenoids. In Streptococcus pneumoniae serotype 4 (strain ATCC BAA-334 / TIGR4), this protein is Isoprenyl transferase.